Reading from the N-terminus, the 90-residue chain is PIK3R3 upstream open reading frame protein (90 aa).

Positions 1–63 (MGPSQLVRAP…PASEATNISD (63 aa)) are disordered. Over residues 27–46 (PRRRCPSMFKCSRRTYRQKP) the composition is skewed to basic residues. The span at 50–63 (TATNPASEATNISD) shows a compositional bias: polar residues.

This Mus musculus (Mouse) protein is PIK3R3 upstream open reading frame protein.